We begin with the raw amino-acid sequence, 76 residues long: Large ribosomal subunit protein eL29 (76 aa).

Basic residues predominate over residues 1 to 29 (MAKSKNHTNHNQNKKAHRNGIKRPLRKRH). 2 disordered regions span residues 1-33 (MAKS…ESTL) and 47-76 (RKGN…PVTL). Serine 31 is modified (phosphoserine). Over residues 51 to 62 (LSREESVKRYNE) the composition is skewed to basic and acidic residues.

The protein belongs to the eukaryotic ribosomal protein eL29 family.

In Drosophila melanogaster (Fruit fly), this protein is Large ribosomal subunit protein eL29 (RpL29).